The chain runs to 95 residues: Large ribosomal subunit protein uL23 (95 aa).

Belongs to the universal ribosomal protein uL23 family. In terms of assembly, part of the 50S ribosomal subunit. Contacts protein L29, and trigger factor when it is bound to the ribosome.

Functionally, one of the early assembly proteins it binds 23S rRNA. One of the proteins that surrounds the polypeptide exit tunnel on the outside of the ribosome. Forms the main docking site for trigger factor binding to the ribosome. This Shouchella clausii (strain KSM-K16) (Alkalihalobacillus clausii) protein is Large ribosomal subunit protein uL23.